Reading from the N-terminus, the 140-residue chain is Nucleoside diphosphate kinase (140 aa).

ATP contacts are provided by lysine 11, phenylalanine 59, arginine 87, threonine 93, arginine 104, and asparagine 114. Catalysis depends on histidine 117, which acts as the Pros-phosphohistidine intermediate.

The protein belongs to the NDK family. As to quaternary structure, homotetramer. Requires Mg(2+) as cofactor.

The protein localises to the cytoplasm. It catalyses the reaction a 2'-deoxyribonucleoside 5'-diphosphate + ATP = a 2'-deoxyribonucleoside 5'-triphosphate + ADP. The enzyme catalyses a ribonucleoside 5'-diphosphate + ATP = a ribonucleoside 5'-triphosphate + ADP. Major role in the synthesis of nucleoside triphosphates other than ATP. The ATP gamma phosphate is transferred to the NDP beta phosphate via a ping-pong mechanism, using a phosphorylated active-site intermediate. This chain is Nucleoside diphosphate kinase, found in Chelativorans sp. (strain BNC1).